Here is a 596-residue protein sequence, read N- to C-terminus: Aspartate--tRNA(Asp/Asn) ligase (596 aa).

Glutamate 175 contacts L-aspartate. The tract at residues 199–202 (QQYK) is aspartate. 2 residues coordinate L-aspartate: arginine 221 and histidine 454. ATP is bound at residue 221–223 (RDE). Glutamate 488 is a binding site for ATP. Residue arginine 495 coordinates L-aspartate. An ATP-binding site is contributed by 540–543 (GIDR).

The protein belongs to the class-II aminoacyl-tRNA synthetase family. Type 1 subfamily. In terms of assembly, homodimer.

The protein localises to the cytoplasm. The catalysed reaction is tRNA(Asx) + L-aspartate + ATP = L-aspartyl-tRNA(Asx) + AMP + diphosphate. Functionally, aspartyl-tRNA synthetase with relaxed tRNA specificity since it is able to aspartylate not only its cognate tRNA(Asp) but also tRNA(Asn). Reaction proceeds in two steps: L-aspartate is first activated by ATP to form Asp-AMP and then transferred to the acceptor end of tRNA(Asp/Asn). The sequence is that of Aspartate--tRNA(Asp/Asn) ligase from Mesorhizobium japonicum (strain LMG 29417 / CECT 9101 / MAFF 303099) (Mesorhizobium loti (strain MAFF 303099)).